We begin with the raw amino-acid sequence, 83 residues long: Large ribosomal subunit protein uL24 (83 aa).

It belongs to the universal ribosomal protein uL24 family. Part of the 50S ribosomal subunit.

Functionally, one of two assembly initiator proteins, it binds directly to the 5'-end of the 23S rRNA, where it nucleates assembly of the 50S subunit. One of the proteins that surrounds the polypeptide exit tunnel on the outside of the subunit. This is Large ribosomal subunit protein uL24 from Symbiobacterium thermophilum (strain DSM 24528 / JCM 14929 / IAM 14863 / T).